A 334-amino-acid polypeptide reads, in one-letter code: Probable aminoacyl tRNA synthase complex-interacting multifunctional protein 2 (334 aa).

A GST C-terminal domain is found at 280 to 327 (LDKRLQKQQYFGGSQMSVADVGVYSSLIRMPAVTEKDLTPALVAWRKR).

As to quaternary structure, component of the aminoacyl-tRNA synthase complex which is comprised of a bifunctional glutamyl-prolyl-tRNA synthase, the monospecific isoleucyl, leucyl, glutaminyl, methionyl, lysyl, arginyl and aspartyl-tRNA synthases, and three auxiliary proteins.

The protein localises to the cytoplasm. It localises to the cytosol. It is found in the nucleus. Required for assembly and stability of the aminoacyl-tRNA synthase complex. The sequence is that of Probable aminoacyl tRNA synthase complex-interacting multifunctional protein 2 from Drosophila melanogaster (Fruit fly).